Reading from the N-terminus, the 346-residue chain is MRKFAAIFVVFFVQCTHLYSLAQARAEPDPGVVEYLKQSCVYGNSSYINVYLYNSRFQGKNLGNQQSCQDINASLPVVFITHGFTSSAQVSTFKDLANAFVQKGHTAFIVDWSEAACTDGLPGVQFAEYNAAASNTYDIGQLMAKYTVDLMNKCKIPLNNIQYVGHSLGSHVCGFAAKHVKKLINKTMPYILALDPADPSFGSNKCGERICKSDAKRIVVFKTSILGIGENIIGHLLIVFDGGKSQPACSWYDVPCSHSESIVYATGMVSGRCQHLAVPWTAQQRINPIQWKFWRVFTSNIPAYPTSDTTNCVVLNTNVFKNDNTFEGEYHAFPDCARNLFKCRQQ.

The signal sequence occupies residues 1 to 26; sequence MRKFAAIFVVFFVQCTHLYSLAQARA. A propeptide spanning residues 27-37 is cleaved from the precursor; it reads EPDPGVVEYLK. N-linked (GlcNAc...) asparagine glycosylation is found at Asn44 and Asn72. The active-site Nucleophile is Ser167. Asn185 carries an N-linked (GlcNAc...) asparagine glycan. Catalysis depends on charge relay system residues Asp195 and His258.

Belongs to the AB hydrolase superfamily. Lipase family. In terms of processing, contains six disulfide bonds. Post-translationally, N-glycosylated; contains mannose. In terms of tissue distribution, expressed by the venom gland.

Its subcellular location is the secreted. The enzyme catalyses a 1,2-diacyl-sn-glycero-3-phosphocholine + H2O = a 2-acyl-sn-glycero-3-phosphocholine + a fatty acid + H(+). Catalyzes the hydrolysis of phosphatidylcholine with phospholipase A1 activity. Induces hemolytic activity. Acts as an allergen. The sequence is that of Phospholipase A1 from Solenopsis invicta (Red imported fire ant).